The sequence spans 158 residues: SsrA-binding protein (158 aa).

A disordered region spans residues 133–158 (KIHDKRETEAKRDWNRQKQRLLKDNA). Positions 136–158 (DKRETEAKRDWNRQKQRLLKDNA) are enriched in basic and acidic residues.

Belongs to the SmpB family.

It localises to the cytoplasm. Its function is as follows. Required for rescue of stalled ribosomes mediated by trans-translation. Binds to transfer-messenger RNA (tmRNA), required for stable association of tmRNA with ribosomes. tmRNA and SmpB together mimic tRNA shape, replacing the anticodon stem-loop with SmpB. tmRNA is encoded by the ssrA gene; the 2 termini fold to resemble tRNA(Ala) and it encodes a 'tag peptide', a short internal open reading frame. During trans-translation Ala-aminoacylated tmRNA acts like a tRNA, entering the A-site of stalled ribosomes, displacing the stalled mRNA. The ribosome then switches to translate the ORF on the tmRNA; the nascent peptide is terminated with the 'tag peptide' encoded by the tmRNA and targeted for degradation. The ribosome is freed to recommence translation, which seems to be the essential function of trans-translation. This is SsrA-binding protein from Ruegeria pomeroyi (strain ATCC 700808 / DSM 15171 / DSS-3) (Silicibacter pomeroyi).